The chain runs to 152 residues: Xanthine-guanine phosphoribosyltransferase (152 aa).

5-phospho-alpha-D-ribose 1-diphosphate is bound by residues Arg-37–Gly-38, Arg-69, and Asp-88–Thr-96. Arg-69 contributes to the GMP binding site. Asp-89 serves as a coordination point for Mg(2+). 2 residues coordinate guanine: Asp-92 and Ile-135. Xanthine-binding residues include Asp-92 and Ile-135. GMP contacts are provided by residues Asp-92 to Thr-96 and Trp-134 to Ile-135.

The protein belongs to the purine/pyrimidine phosphoribosyltransferase family. XGPT subfamily. Homotetramer. The cofactor is Mg(2+).

It localises to the cell inner membrane. The enzyme catalyses GMP + diphosphate = guanine + 5-phospho-alpha-D-ribose 1-diphosphate. It carries out the reaction XMP + diphosphate = xanthine + 5-phospho-alpha-D-ribose 1-diphosphate. It catalyses the reaction IMP + diphosphate = hypoxanthine + 5-phospho-alpha-D-ribose 1-diphosphate. Its pathway is purine metabolism; GMP biosynthesis via salvage pathway; GMP from guanine: step 1/1. It functions in the pathway purine metabolism; XMP biosynthesis via salvage pathway; XMP from xanthine: step 1/1. Its function is as follows. Purine salvage pathway enzyme that catalyzes the transfer of the ribosyl-5-phosphate group from 5-phospho-alpha-D-ribose 1-diphosphate (PRPP) to the N9 position of the 6-oxopurines guanine and xanthine to form the corresponding ribonucleotides GMP (guanosine 5'-monophosphate) and XMP (xanthosine 5'-monophosphate), with the release of PPi. To a lesser extent, also acts on hypoxanthine. This chain is Xanthine-guanine phosphoribosyltransferase, found in Escherichia coli (strain UTI89 / UPEC).